The chain runs to 66 residues: Small ribosomal subunit protein bS21 (66 aa).

The protein belongs to the bacterial ribosomal protein bS21 family.

This chain is Small ribosomal subunit protein bS21, found in Maridesulfovibrio salexigens (strain ATCC 14822 / DSM 2638 / NCIMB 8403 / VKM B-1763) (Desulfovibrio salexigens).